Consider the following 476-residue polypeptide: NADP-dependent glyceraldehyde-3-phosphate dehydrogenase (476 aa).

Position 103 (arginine 103) interacts with substrate. Residue serine 151 participates in NADP(+) binding. A substrate-binding site is contributed by 154–155 (NY). Residues lysine 177, threonine 180, aspartate 215, and 230-251 (GSTP…MLEL) each bind NADP(+). Residues glutamate 250 and cysteine 284 contribute to the active site. 283–285 (RCT) contributes to the substrate binding site. Residue glutamate 377 participates in NADP(+) binding. Arginine 437 contacts substrate.

Belongs to the aldehyde dehydrogenase family. Homotetramer.

It carries out the reaction D-glyceraldehyde 3-phosphate + NADP(+) + H2O = (2R)-3-phosphoglycerate + NADPH + 2 H(+). Functionally, catalyzes the irreversible NADP-dependent oxidation of glyceraldehyde-3-phosphate to 3-phosphoglycerate. Is not able to use NAD instead of NADP. May play an important role in NADPH production in S.equinus. This chain is NADP-dependent glyceraldehyde-3-phosphate dehydrogenase (gapN), found in Streptococcus equinus (Streptococcus bovis).